The primary structure comprises 513 residues: uncharacterized protein (513 aa).

Basic and acidic residues predominate over residues 1 to 16 (MPREHDSKYHRERDMR). The tract at residues 1–21 (MPREHDSKYHRERDMRSGLQE) is disordered.

This is an uncharacterized protein from Sinorhizobium fredii (strain NBRC 101917 / NGR234).